Reading from the N-terminus, the 512-residue chain is MTKKFVGLIILDGLGLTDQKENNAFHLAKTPYLDYLLKNFPNTTLKASGEEVGLPQGQMGNSEVGHLNLGAGRVVYQSLTQINKAIRDKTFFTNKQFLQAIEHVKKNNSKIHLLGLISDGGIHSHLDHFKALFDLLKENNLANNTFLHAFTDGRDTGTHSGINYIKNLLDYGFNIASVAGRYYALDRDNNWDRINLVYNMLTSKQAPVITLSLEKTMQNFYNQGITDEFITPFITDPNGLIDDNDAVIFVNFRPDRAMRLATALSNPCATNAFCSEGKTNFCGNKLVNNLFLVTMTQYNVQVKSVVAFEKKTLKNIYGEVIANLGMHQLRISETEKYPHVTFFFDGGKELQLKNADRILIPSPKVKTYDLKPEMSALEITNAAKTAIFSRKYDTLILNFANPDMVGHTGFLDATIKAVQTVDSCLKEVLNAIFAVKGKACIVADHGNAEKMKDNQGNPHTAHTTNLVPFIVTDKNVVLKPGSLCDVAPTMLDLLEIKKPQEMTGNSLIKKLV.

Mn(2+)-binding residues include D12 and S62. S62 (phosphoserine intermediate) is an active-site residue. Residues H123, 154–155, R181, R187, 253–256, and K336 each bind substrate; these read RD and RPDR. Residues D403, H407, D444, H445, and H462 each contribute to the Mn(2+) site.

It belongs to the BPG-independent phosphoglycerate mutase family. In terms of assembly, monomer. Mn(2+) serves as cofactor.

It catalyses the reaction (2R)-2-phosphoglycerate = (2R)-3-phosphoglycerate. The protein operates within carbohydrate degradation; glycolysis; pyruvate from D-glyceraldehyde 3-phosphate: step 3/5. Its function is as follows. Catalyzes the interconversion of 2-phosphoglycerate and 3-phosphoglycerate. This chain is 2,3-bisphosphoglycerate-independent phosphoglycerate mutase, found in Aster yellows witches'-broom phytoplasma (strain AYWB).